Here is a 222-residue protein sequence, read N- to C-terminus: Latexin (222 aa).

One can recognise a Cystatin LXN-type 1 domain in the interval 1-97; sequence MEIPPTNYPA…NFTFEGETGK (97 aa). K55 is modified (N6-acetyllysine). The interval 98–117 is alpha-helical linker; the sequence is NPDEEDNTFYQRLKSMKEPL. The region spanning 118–222 is the Cystatin LXN-type 2 domain; it reads EAQNIPDNFG…SRLPKEVQLE (105 aa).

Belongs to the protease inhibitor I47 (latexin) family. In terms of tissue distribution, highly expressed in heart, prostate, ovary, kidney, pancreas, and colon, moderate or low in other tissues including brain.

The protein localises to the cytoplasm. Hardly reversible, non-competitive, and potent inhibitor of CPA1, CPA2 and CPA4. May play a role in inflammation. This is Latexin (LXN) from Homo sapiens (Human).